Reading from the N-terminus, the 70-residue chain is uncharacterized protein (70 aa).

Residues 50–70 (FYLLVFFIILWVSREAFFYLI) traverse the membrane as a helical segment.

This sequence belongs to the M.jannaschii MJ0023/MJ0349/MJ1072/MJ1074/MJ1107/MJECL16 family.

The protein localises to the membrane. This is an uncharacterized protein from Methanocaldococcus jannaschii (strain ATCC 43067 / DSM 2661 / JAL-1 / JCM 10045 / NBRC 100440) (Methanococcus jannaschii).